A 253-amino-acid polypeptide reads, in one-letter code: Acetylglutamate kinase (253 aa).

Substrate-binding positions include Gly40–Gly41, Arg62, and Asn154.

This sequence belongs to the acetylglutamate kinase family. ArgB subfamily.

It is found in the cytoplasm. The enzyme catalyses N-acetyl-L-glutamate + ATP = N-acetyl-L-glutamyl 5-phosphate + ADP. The protein operates within amino-acid biosynthesis; L-arginine biosynthesis; N(2)-acetyl-L-ornithine from L-glutamate: step 2/4. Functionally, catalyzes the ATP-dependent phosphorylation of N-acetyl-L-glutamate. In Staphylococcus saprophyticus subsp. saprophyticus (strain ATCC 15305 / DSM 20229 / NCIMB 8711 / NCTC 7292 / S-41), this protein is Acetylglutamate kinase.